The sequence spans 227 residues: Germin-like protein subfamily 1 member 3 (227 aa).

Residues 1-24 (MKYPFQCFLAKIILLALASSFVSC) form the signal peptide. A disulfide bond links Cys34 and Cys50. A Cupin type-1 domain is found at 64–212 (SGLNIPGNTN…AFALDINIVR (149 aa)). Residues His109, His111, and Glu116 each coordinate Mn(2+). A glycan (N-linked (GlcNAc...) asparagine) is linked at Asn136. His160 lines the Mn(2+) pocket.

Belongs to the germin family. As to quaternary structure, oligomer (believed to be a pentamer but probably hexamer).

The protein localises to the secreted. It is found in the extracellular space. Its subcellular location is the apoplast. In terms of biological role, may play a role in plant defense. Probably has no oxalate oxidase activity even if the active site is conserved. The chain is Germin-like protein subfamily 1 member 3 from Arabidopsis thaliana (Mouse-ear cress).